The following is a 344-amino-acid chain: MNGSSANPRAALSSAMTDPFGRTISYLRVSVTDRCDLRCFYCMSEDMTFLPKADLLTLEELDRLCSAFIAKGVKKLRLTGGEPLVRRNVMTLVRSLSRHLSSGALSELTLTTNGTQLAKYARELADCGVRRINVSLDTLDPKKFREITRWGEIDKVLEGIEAARAAGLAVKINAVALKNLNEDELPSLMRWAHGKNMGLTLIEVMPMGEIGAGRIDQYLPLSLVRARLAQQFTLMDLAESTGGPARYVSVAETGGKLGFITPMTHNFCESCNRVRITCTGTLHTCLGHEDASDLRKPLRASDDDMLLADAIDRAIGLKPKGHDFIIDRRHNRPSVSRHMSVTGG.

The Radical SAM core domain maps to 19 to 244 (PFGRTISYLR…MDLAESTGGP (226 aa)). A GTP-binding site is contributed by Arg-28. Residues Cys-35 and Cys-39 each contribute to the [4Fe-4S] cluster site. Tyr-41 is an S-adenosyl-L-methionine binding site. Position 42 (Cys-42) interacts with [4Fe-4S] cluster. Arg-77 is a GTP binding site. Residue Gly-81 coordinates S-adenosyl-L-methionine. Residue Thr-111 participates in GTP binding. Ser-135 is an S-adenosyl-L-methionine binding site. GTP is bound at residue Lys-171. Met-205 contributes to the S-adenosyl-L-methionine binding site. The [4Fe-4S] cluster site is built by Cys-268 and Cys-271. 273–275 (RVR) contacts GTP. Cys-285 contacts [4Fe-4S] cluster.

Belongs to the radical SAM superfamily. MoaA family. As to quaternary structure, monomer and homodimer. [4Fe-4S] cluster is required as a cofactor.

It carries out the reaction GTP + AH2 + S-adenosyl-L-methionine = (8S)-3',8-cyclo-7,8-dihydroguanosine 5'-triphosphate + 5'-deoxyadenosine + L-methionine + A + H(+). The protein operates within cofactor biosynthesis; molybdopterin biosynthesis. Its function is as follows. Catalyzes the cyclization of GTP to (8S)-3',8-cyclo-7,8-dihydroguanosine 5'-triphosphate. The polypeptide is GTP 3',8-cyclase (Bradyrhizobium diazoefficiens (strain JCM 10833 / BCRC 13528 / IAM 13628 / NBRC 14792 / USDA 110)).